Consider the following 279-residue polypeptide: 3-methyl-2-oxobutanoate hydroxymethyltransferase (279 aa).

Mg(2+)-binding residues include Asp44 and Asp83. Residues 44–45 (DS), Asp83, and Lys112 each bind 3-methyl-2-oxobutanoate. Glu114 serves as a coordination point for Mg(2+). Glu181 (proton acceptor) is an active-site residue.

It belongs to the PanB family. In terms of assembly, homodecamer; pentamer of dimers. Requires Mg(2+) as cofactor.

The protein localises to the cytoplasm. It carries out the reaction 3-methyl-2-oxobutanoate + (6R)-5,10-methylene-5,6,7,8-tetrahydrofolate + H2O = 2-dehydropantoate + (6S)-5,6,7,8-tetrahydrofolate. It participates in cofactor biosynthesis; coenzyme A biosynthesis. Catalyzes the reversible reaction in which hydroxymethyl group from 5,10-methylenetetrahydrofolate is transferred onto alpha-ketoisovalerate to form ketopantoate. This Nitrosopumilus maritimus (strain SCM1) protein is 3-methyl-2-oxobutanoate hydroxymethyltransferase.